An 884-amino-acid chain; its full sequence is MNIPTKFTTSKIRSDFLEFFKNKGHKIVPSAPLVPGNDPTLLFTNSGMVQFKDVFLGAEKRSEVRVADVQCCLRAGGKHNDLDSVGYTARHHTFFEMLGNWSFGDYFKKEAITWAWELLTHVWELPPERLLVTVYHTDDESYALWRDMVGVPEDRIVRIGDNKGAPFASDNFWQMADTGPCGPCTEIFYDHGEHIPGGPPGSPDEDGDRFIEIWNLVFMQFDRQSDGTLVPLPAPCVDTGMGLERLAAILQHVHTNYEIDLFQTLILKAAELTAVADVQNKSLRVIADHSRACAFLIVDGVLPSNEGRGYVLRRIIRRALRHGWMLGVRQPFFNNMVPTLVAVMGDAYPKLQAAAESVMRTLLAEEERFAETLDVGMKIFNEVAAKVANGVIPGSDAFRLYDTYGFPVDLTADIARERGMSVDMVGFEAAMTQQRKTARAAGKFGRGVQLSAERAAMLSPTVFLGYEQLQADGLRVVALLSDGGLTDSASVGDEVIVLTDRTPFYAESGGQVGDIGTLMASDGVRLEVTDTQKLMGQFHGHVARIVQGGVKVGDVLSGSVAVARRKMVALNHSATHLLHCALRSVFGTHVVQKGSLVAPDRLRFDFSHFEPIAAAQMTLIERMVNDEVRANHLVMIEQMGMQAALDAGAMALFGEKYGEHVRVVTMGTSVELCGGTHINRTGDIGLFKIISECGVSSGVRRIEAVTGESALNHVLAEEHRLYEVAGLIGSNANDVVNHIRQLTDRQKTLERELEKLKGKLISGTITDLLSTAVNVADVKVVAARLDGLDGKALREALDRLKLQLSDAVIVLAGVTGGKVALVTAVNGRRAMGKVKADTLLSHVATQINGRGGGRVDFAQGGGEDGPSLRSALDGVATWVKQHLN.

The Zn(2+) site is built by histidine 572, histidine 576, cysteine 673, and histidine 677.

The protein belongs to the class-II aminoacyl-tRNA synthetase family. Requires Zn(2+) as cofactor.

It is found in the cytoplasm. The enzyme catalyses tRNA(Ala) + L-alanine + ATP = L-alanyl-tRNA(Ala) + AMP + diphosphate. In terms of biological role, catalyzes the attachment of alanine to tRNA(Ala) in a two-step reaction: alanine is first activated by ATP to form Ala-AMP and then transferred to the acceptor end of tRNA(Ala). Also edits incorrectly charged Ser-tRNA(Ala) and Gly-tRNA(Ala) via its editing domain. This chain is Alanine--tRNA ligase, found in Xylella fastidiosa (strain 9a5c).